The primary structure comprises 372 residues: Glutamate 5-kinase (372 aa).

K14 contributes to the ATP binding site. Residues S54, D141, and N153 each coordinate substrate. T173–D174 contacts ATP. In terms of domain architecture, PUA spans R280–M358.

Belongs to the glutamate 5-kinase family.

The protein localises to the cytoplasm. It catalyses the reaction L-glutamate + ATP = L-glutamyl 5-phosphate + ADP. The protein operates within amino-acid biosynthesis; L-proline biosynthesis; L-glutamate 5-semialdehyde from L-glutamate: step 1/2. Its function is as follows. Catalyzes the transfer of a phosphate group to glutamate to form L-glutamate 5-phosphate. This chain is Glutamate 5-kinase, found in Paraburkholderia xenovorans (strain LB400).